Here is a 672-residue protein sequence, read N- to C-terminus: MKDLLSSLSKGIPFEPLPEHPGLDSTVPHAPGRPINLTLNEKKLAIKNSLRYFPNSLHSILANEFLEELNKYGHIYMYRFRPTHYEMKAYPIEEYPAKSRQAASIMLMIMNNLDREVAQFPNELVTYGGNGSVFQNWAQYHLTMKYLSEMTDQQTLTMYSGHPMGLFPSNESSPRVIVTNGMVIPNYSSHKDYERMYAQGVTQYGQMTAGSYCYIGPQGIVHGTTITLLNAGRKYLGVESLIGKVFVSSGLGGMSGAQTKAAYICGAICIVAEVSPAAVKKRHAQNWVMEVYSDLNELFARGSCSKEKKPLSIAYQGNVVTLWEKLVEEKDITVDLGSDQTSLHNPFNGGYYPVQCSFEESNRLMVQEPTKFKEMVQETLRRHTTAINALSARGMKFWDYGNSFLLEASRAKADIIKPGTDGKEFIYPSYVQDIMGDIFSLGFGPFRWVCTSGNPKDLEITDRIAKELIEKLRSQPGVPKNVQQQFNDNHLWISQAGEHKLVVGSQARILYSDCIGRSELAVAFNKAVADGTLSAPVVISRDHHDVSGTDAPWRETSNIKDGSQFCADMAIHNVIGDSFRGATWVAIHNGGGTGFGEAINGGFGLYLCGSKLQEEKARMMLNWDVNNGIARRSWSYNDNAENTIKRAMELDPSLKVTIPNHTSDDLINSLNF.

NAD(+)-binding positions include 128–129 (GG), Gln-206, 253–255 (GMS), Glu-273, 318–319 (NV), 340–344 (QTSLH), 351–352 (YY), Tyr-400, and Gly-592.

Belongs to the urocanase family. Requires NAD(+) as cofactor.

It carries out the reaction 4-imidazolone-5-propanoate = trans-urocanate + H2O. It functions in the pathway amino-acid degradation; L-histidine degradation into L-glutamate; N-formimidoyl-L-glutamate from L-histidine: step 2/3. This is Probable urocanate hydratase (uroc1) from Dictyostelium discoideum (Social amoeba).